The primary structure comprises 197 residues: Methylamine utilization protein MauD (197 aa).

Residues 3 to 23 traverse the membrane as a helical segment; sequence FLIASNILLWIAFLGVTVVML. Positions 48-180 constitute a Thioredoxin domain; it reads PDIGDMAPEF…LESLLEADKT (133 aa).

It is found in the membrane. The protein operates within one-carbon metabolism; methylamine degradation. Functionally, may be specifically involved in the processing, transport, and/or maturation of the MADH beta-subunit. This chain is Methylamine utilization protein MauD (mauD), found in Paracoccus versutus (Thiobacillus versutus).